The chain runs to 366 residues: Carbamoyl phosphate synthase small chain (366 aa).

A CPSase region spans residues M1–D171. Residues S47, G221, and G223 each contribute to the L-glutamine site. The Glutamine amidotransferase type-1 domain occupies S173–K360. C248 (nucleophile) is an active-site residue. Positions 249, 252, 290, 292, and 293 each coordinate L-glutamine. Residues H333 and E335 contribute to the active site.

It belongs to the CarA family. Composed of two chains; the small (or glutamine) chain promotes the hydrolysis of glutamine to ammonia, which is used by the large (or ammonia) chain to synthesize carbamoyl phosphate. Tetramer of heterodimers (alpha,beta)4.

It carries out the reaction hydrogencarbonate + L-glutamine + 2 ATP + H2O = carbamoyl phosphate + L-glutamate + 2 ADP + phosphate + 2 H(+). The catalysed reaction is L-glutamine + H2O = L-glutamate + NH4(+). Its pathway is amino-acid biosynthesis; L-arginine biosynthesis; carbamoyl phosphate from bicarbonate: step 1/1. It functions in the pathway pyrimidine metabolism; UMP biosynthesis via de novo pathway; (S)-dihydroorotate from bicarbonate: step 1/3. Small subunit of the glutamine-dependent carbamoyl phosphate synthetase (CPSase). CPSase catalyzes the formation of carbamoyl phosphate from the ammonia moiety of glutamine, carbonate, and phosphate donated by ATP, constituting the first step of 2 biosynthetic pathways, one leading to arginine and/or urea and the other to pyrimidine nucleotides. The small subunit (glutamine amidotransferase) binds and cleaves glutamine to supply the large subunit with the substrate ammonia. This chain is Carbamoyl phosphate synthase small chain, found in Staphylococcus haemolyticus (strain JCSC1435).